The chain runs to 206 residues: uncharacterized protein (206 aa).

Residues 21–43 (VPINITMSICALTALLKSYSITG) form a helical membrane-spanning segment.

The protein localises to the membrane. This is an uncharacterized protein from Acanthamoeba polyphaga (Amoeba).